The chain runs to 224 residues: UPF0758 protein Pfl01_5539 (224 aa).

Residues 102–224 (ALENPQVVRD…PLSMAECGWM (123 aa)) form the MPN domain. The Zn(2+) site is built by His-173, His-175, and Asp-186. The short motif at 173-186 (HNHPSGNSDPSQAD) is the JAMM motif element.

Belongs to the UPF0758 family.

The chain is UPF0758 protein Pfl01_5539 from Pseudomonas fluorescens (strain Pf0-1).